The primary structure comprises 218 residues: MSSGNTKDKHRAYKRKGSPGRDERKRPWQPHHRSRSRSPIRRSGETSSGSYRQEHQISHLSSCTASKISDPVTKTKENTSGKRDSRTNPYTVFSQHKASHPDAPGWCGFYWHSTRIARNGTNAIFNEMKQQFQQLQLDNKIGWDSARELLFSQKKSLDQQYRNMFWHFRNASDCERCNYWDNVYRMHLAHVSSQTESEEITDEEMLSAAESMETDASN.

Disordered regions lie at residues 1 to 89 (MSSG…RTNP) and 195 to 218 (TESE…DASN). Basic residues-rich tracts occupy residues 8 to 18 (DKHRAYKRKGS) and 27 to 40 (PWQP…RSPI). Residues 58 to 67 (SHLSSCTASK) are compositionally biased toward polar residues. Positions 73 to 86 (TKTKENTSGKRDSR) are enriched in basic and acidic residues. A compositionally biased stretch (acidic residues) spans 196–205 (ESEEITDEEM).

It belongs to the Bocaparvovirus Non-structural protein NP-1 family.

Its subcellular location is the host nucleus. Required for the expression of the capsid proteins. Performs the splicing and internal polyadenylation of the viral capsid-encoding mRNA precursor, which allows its maturation and expression. Transactivates the viral promoter. The polypeptide is Non-structural protein NP-1 (NP1) (Human bocavirus 3 (HBoV3)).